A 249-amino-acid polypeptide reads, in one-letter code: uncharacterized protein (249 aa).

This sequence belongs to the AIM2 family.

The protein localises to the cytoplasm. It is found in the nucleus. This is an uncharacterized protein from Schizosaccharomyces pombe (strain 972 / ATCC 24843) (Fission yeast).